A 137-amino-acid chain; its full sequence is Methylglyoxal synthase (137 aa).

The MGS-like domain maps to 1–137 (MKIALIAHDK…NLVRGGEPNV (137 aa)). Residues His8, Lys12, 34 to 37 (TGTT), and 54 to 55 (SG) each bind substrate. Asp60 acts as the Proton donor/acceptor in catalysis. Residue His87 participates in substrate binding.

The protein belongs to the methylglyoxal synthase family.

It catalyses the reaction dihydroxyacetone phosphate = methylglyoxal + phosphate. Its function is as follows. Catalyzes the formation of methylglyoxal from dihydroxyacetone phosphate. This is Methylglyoxal synthase from Bacillus velezensis (strain DSM 23117 / BGSC 10A6 / LMG 26770 / FZB42) (Bacillus amyloliquefaciens subsp. plantarum).